A 382-amino-acid polypeptide reads, in one-letter code: Alkanesulfonate monooxygenase (382 aa).

It belongs to the SsuD family.

The catalysed reaction is an alkanesulfonate + FMNH2 + O2 = an aldehyde + FMN + sulfite + H2O + 2 H(+). In terms of biological role, catalyzes the desulfonation of aliphatic sulfonates. In Pseudomonas entomophila (strain L48), this protein is Alkanesulfonate monooxygenase.